The primary structure comprises 278 residues: MTRVIVISNLRLAQAFVDYMATHHVALEIRPDAQGVEIWLADDEQLSAVQHELEQFLLDPLNPRYQAASWQAGNVNSNLPYQRFSYLQTLRSQAGPLTLSVMVLCIAIYILMLITGDMAVMSWLAWPYNSSQYLQIWRWVSHAFLHFSLLHILFNLMWWWYLGGQMEKRLGTSKLLVLTIVSAVFSGWGQSLFSGANFGGLSGVVYALMGYVWLTGERAPERGISLPRGLMAFSVLWLIAGYFDILGLSIANAAHVSGLIIGLLMAFWDTRNSARTVQ.

6 consecutive transmembrane segments (helical) span residues 94 to 114 (AGPLTLSVMVLCIAIYILMLI), 143 to 163 (AFLHFSLLHILFNLMWWWYLG), 175 to 195 (LLVLTIVSAVFSGWGQSLFSG), 196 to 216 (ANFGGLSGVVYALMGYVWLTG), 224 to 241 (ISLPRGLMAFSVLWLIAG), and 245 to 267 (ILGLSIANAAHVSGLIIGLLMAF). Ser202 serves as the catalytic Nucleophile. His255 is a catalytic residue.

It belongs to the peptidase S54 family.

The protein localises to the cell inner membrane. It carries out the reaction Cleaves type-1 transmembrane domains using a catalytic dyad composed of serine and histidine that are contributed by different transmembrane domains.. In terms of biological role, rhomboid-type serine protease that catalyzes intramembrane proteolysis. This is Rhomboid protease GlpG from Yersinia pestis bv. Antiqua (strain Antiqua).